Reading from the N-terminus, the 567-residue chain is Urease subunit alpha (567 aa).

The region spanning 129–567 (GGVDSHIHFI…LPLAQRYFLF (439 aa)) is the Urease domain. Positions 134, 136, and 217 each coordinate Ni(2+). Position 217 is an N6-carboxylysine (Lys217). A substrate-binding site is contributed by His219. His246 and His272 together coordinate Ni(2+). His320 (proton donor) is an active-site residue. Asp360 contacts Ni(2+).

The protein belongs to the metallo-dependent hydrolases superfamily. Urease alpha subunit family. In terms of assembly, heterotrimer of UreA (gamma), UreB (beta) and UreC (alpha) subunits. Three heterotrimers associate to form the active enzyme. Ni cation is required as a cofactor. Carboxylation allows a single lysine to coordinate two nickel ions.

It is found in the cytoplasm. It catalyses the reaction urea + 2 H2O + H(+) = hydrogencarbonate + 2 NH4(+). The protein operates within nitrogen metabolism; urea degradation; CO(2) and NH(3) from urea (urease route): step 1/1. This Pseudomonas putida (strain ATCC 47054 / DSM 6125 / CFBP 8728 / NCIMB 11950 / KT2440) protein is Urease subunit alpha.